The chain runs to 376 residues: Lipid-A-disaccharide synthase (376 aa).

The protein belongs to the LpxB family.

It carries out the reaction a lipid X + a UDP-2-N,3-O-bis[(3R)-3-hydroxyacyl]-alpha-D-glucosamine = a lipid A disaccharide + UDP + H(+). Its pathway is bacterial outer membrane biogenesis; LPS lipid A biosynthesis. In terms of biological role, condensation of UDP-2,3-diacylglucosamine and 2,3-diacylglucosamine-1-phosphate to form lipid A disaccharide, a precursor of lipid A, a phosphorylated glycolipid that anchors the lipopolysaccharide to the outer membrane of the cell. The chain is Lipid-A-disaccharide synthase from Coxiella burnetii (strain CbuG_Q212) (Coxiella burnetii (strain Q212)).